Reading from the N-terminus, the 360-residue chain is Cannabinoid receptor 2 (360 aa).

The Extracellular segment spans residues 1–33 (MEECWVTEIANGSKDGLDSNPMKDYMILSGPQK). N-linked (GlcNAc...) asparagine glycosylation is present at Asn-11. A helical transmembrane segment spans residues 34-59 (TAVAVLCTLLGLLSALENVAVLYLIL). At 60-71 (SSHQLRRKPSYL) the chain is on the cytoplasmic side. The chain crosses the membrane as a helical span at residues 72–92 (FIGSLAGADFLASVVFACSFV). The Extracellular portion of the chain corresponds to 93–104 (NFHVFHGVDSKA). Residues 105–129 (VFLLKIGSVTMTFTASVGSLLLTAI) form a helical membrane-spanning segment. The Cytoplasmic portion of the chain corresponds to 130–149 (DRYLCLRYPPSYKALLTRGR). Residues 150–172 (ALVTLGIMWVLSALVSYLPLMGW) traverse the membrane as a helical segment. At 173-188 (TCCPRPCSELFPLIPN) the chain is on the extracellular side. The helical transmembrane segment at 189 to 214 (DYLLSWLLFIAFLFSGIIYTYGHVLW) threads the bilayer. Residues 215-246 (KAHQHVASLSGHQDRQVPGMARMRLDVRLAKT) are Cytoplasmic-facing. The chain crosses the membrane as a helical span at residues 247–267 (LGLVLAVLLICWFPVLALMAH). Topologically, residues 268-279 (SLATTLSDQVKK) are extracellular. Residues 280–301 (AFAFCSMLCLINSMVNPVIYAL) traverse the membrane as a helical segment. The Cytoplasmic portion of the chain corresponds to 302-360 (RSGEIRSSAHHCLAHWKKCVRGLGSEAKEEAPRSSVTETEADGKITPWPDSRDLDLSDC). A disordered region spans residues 327–360 (EAKEEAPRSSVTETEADGKITPWPDSRDLDLSDC). Phosphoserine is present on residues Ser-335 and Ser-336. A Phosphothreonine modification is found at Thr-338. The segment covering 351–360 (DSRDLDLSDC) has biased composition (basic and acidic residues). Ser-352 is modified (phosphoserine).

This sequence belongs to the G-protein coupled receptor 1 family. Post-translationally, constitutively phosphorylated on Ser-352; phosphorylation increases cell internalization and desensitizes the receptor. Preferentially expressed in cells of the immune system with higher expression in B-cells and NK cells (at protein level). Expressed in skin in suprabasal layers and hair follicles (at protein level). Highly expressed in tonsil and to a lower extent in spleen, peripheral blood mononuclear cells, and thymus. PubMed:14657172 could not detect expression in normal brain. Expressed in brain by perivascular microglial cells and dorsal root ganglion sensory neurons (at protein level). Two isoforms are produced by alternative promoter usage and differ only in the 5' UTR: isoform CB2A is observed predominantly in testis with some expression in brain, while isoform CB2B is predominant in spleen and leukocytes.

It localises to the cell membrane. The protein localises to the cell projection. It is found in the dendrite. Its subcellular location is the perikaryon. Heterotrimeric G protein-coupled receptor for endocannabinoid 2-arachidonoylglycerol mediating inhibition of adenylate cyclase. May function in inflammatory response, nociceptive transmission and bone homeostasis. In Homo sapiens (Human), this protein is Cannabinoid receptor 2 (CNR2).